The following is a 97-amino-acid chain: Putative pterin-4-alpha-carbinolamine dehydratase (97 aa).

Belongs to the pterin-4-alpha-carbinolamine dehydratase family.

It catalyses the reaction (4aS,6R)-4a-hydroxy-L-erythro-5,6,7,8-tetrahydrobiopterin = (6R)-L-erythro-6,7-dihydrobiopterin + H2O. This chain is Putative pterin-4-alpha-carbinolamine dehydratase, found in Christiangramia forsetii (strain DSM 17595 / CGMCC 1.15422 / KT0803) (Gramella forsetii).